The sequence spans 270 residues: Tryptophan synthase alpha chain (270 aa).

Residues E50 and D61 each act as proton acceptor in the active site.

It belongs to the TrpA family. As to quaternary structure, tetramer of two alpha and two beta chains.

It catalyses the reaction (1S,2R)-1-C-(indol-3-yl)glycerol 3-phosphate + L-serine = D-glyceraldehyde 3-phosphate + L-tryptophan + H2O. Its pathway is amino-acid biosynthesis; L-tryptophan biosynthesis; L-tryptophan from chorismate: step 5/5. In terms of biological role, the alpha subunit is responsible for the aldol cleavage of indoleglycerol phosphate to indole and glyceraldehyde 3-phosphate. In Chlorobium luteolum (strain DSM 273 / BCRC 81028 / 2530) (Pelodictyon luteolum), this protein is Tryptophan synthase alpha chain.